A 247-amino-acid chain; its full sequence is uncharacterized protein (247 aa).

This is an uncharacterized protein from Schizosaccharomyces pombe (strain 972 / ATCC 24843) (Fission yeast).